Reading from the N-terminus, the 309-residue chain is Sulfate adenylyltransferase subunit 2 (309 aa).

The protein belongs to the PAPS reductase family. CysD subfamily. As to quaternary structure, heterodimer composed of CysD, the smaller subunit, and CysN.

It carries out the reaction sulfate + ATP + H(+) = adenosine 5'-phosphosulfate + diphosphate. Its pathway is sulfur metabolism; hydrogen sulfide biosynthesis; sulfite from sulfate: step 1/3. With CysN forms the ATP sulfurylase (ATPS) that catalyzes the adenylation of sulfate producing adenosine 5'-phosphosulfate (APS) and diphosphate, the first enzymatic step in sulfur assimilation pathway. APS synthesis involves the formation of a high-energy phosphoric-sulfuric acid anhydride bond driven by GTP hydrolysis by CysN coupled to ATP hydrolysis by CysD. This is Sulfate adenylyltransferase subunit 2 from Aeromonas salmonicida (strain A449).